A 63-amino-acid chain; its full sequence is Large ribosomal subunit protein uL30 (63 aa).

The protein belongs to the universal ribosomal protein uL30 family. As to quaternary structure, part of the 50S ribosomal subunit.

The chain is Large ribosomal subunit protein uL30 from Rhodospirillum rubrum (strain ATCC 11170 / ATH 1.1.1 / DSM 467 / LMG 4362 / NCIMB 8255 / S1).